An 81-amino-acid polypeptide reads, in one-letter code: Neuronatin (81 aa).

This sequence belongs to the neuronatin family.

Functionally, may participate in the maintenance of segment identity in the hindbrain and pituitary development, and maturation or maintenance of the overall structure of the nervous system. May function as a regulatory subunit of ion channels. The protein is Neuronatin (NNAT) of Sus scrofa (Pig).